The primary structure comprises 83 residues: Small ribosomal subunit protein uS17 (83 aa).

Belongs to the universal ribosomal protein uS17 family. As to quaternary structure, part of the 30S ribosomal subunit.

One of the primary rRNA binding proteins, it binds specifically to the 5'-end of 16S ribosomal RNA. The polypeptide is Small ribosomal subunit protein uS17 (Buchnera aphidicola subsp. Acyrthosiphon pisum (strain 5A)).